The following is a 1843-amino-acid chain: MSDKVSTSLAAQLHSHALASAEAGGIGGVNGGPIACHASTDKDAQAPPLQFEMDAPAAAISAQLNFKIVPADSLPGLSYQDMFASMNTSQISNASTESSCSPPIQGAVPPPKPSRHMAVQPLNSKSCRFPKLEECAHFHYERVQLGPLSVQLLDDKSEHMGSSIASQSLGGDLPHSSLRSFSPESCWFIIRVCPQRCEPFLIKRSFENMQLLDEMLHRCVYDRKISGLRNMEELAAELPSESDVEYAVAKYLERFSKIASDSLTCGTILTWLQLDNKGRRLPLADGETQRTINTPAVGAAYGVRRYQAQAPDEINIEVGDMISVIDMPSPAESIWWRGKKSHLQKSLYEVGFFPQSCVATIGDKVPRNFPMPAPLVGHLDASPTKPVLRKHGKLIAFFRSFILSRPSRRRLKQSGIYRERVFNCDLSEHLLNSGQDIPMVLRSCAEFIENYGVIDGIYRLSGITSNIQRLRRAFDEERVPDLGNPEMKQDIHAVSSLLKMYFRELPNPLCTYQLYDNFVEAIQVKADEADERLRLMKETVLKLPPPHYRTLKYLAEHLYKVSQHHGRTGMTDKNLAIVWAPNLLRSPALESGGVAALRGVGVQAVVTEYLIRNCHNIFDALDDHPARHSMVASATAAAANAAGGELRLESLTDCESLLVEQREQDQSLGVVERPKSLSTGGAKLISLEEAQERHSRVEGADLKQSLPISMLTSASSNAASNIGSYIEVGGGPSSLPDKYHTVLSAPRSWQKRKPDKTPSWKSIFSRSQRQGNPDPGQKITTDVKDSVASRVSFVQASHAHASKELTKHDKPKSIELLETTSNERDPKPMDLCIRSNSIDSLRTVGHSRSVSHDSYFDLLQSPQRGHMTTCPSRELSELGLNFDREEPEMRIFSESESLVSSPRVGKENVPPASGSATRRIMRARPEDFSSQTNSVNPSPKKQPRLNLLSPSSARTMPPPPLSAPGTASSSCGHESGGAENCCKRYKLEDQLCDIQFIDCGTPENVPTTQQQFASVEVHPPPKPARANQSPISSSNGASVGSSSSSTRYSYPSVQLGAKRKEQQDAKERFSYQGTFTQPGQKQESSAPRPVHSTNNGATLRKPRVEPVEDGQIKLHVPTPTTPARSPRYSLLLCDTESSDNSSAVNTPQYDMEPLMLTSAMSGVSGVSSNVQQQQLLLGVDASSSYLGSSHESLGQNINNHHDAEQRDMNALKRELSLDLNPLQPRLPQPANRAATLPVKDQLQAAAAAMCSSPNNSNFTDNTSQSVTPSEYGYQHLQRQLSMHSLLATDESSPVYEDFEQTPVKMVPSPIKSTISITYKSPEKEKKPSAILETNFDENTVYEQVKLFRNSVTEVNQMLHERSSLKQIAEEEQHDGGAYKAAEMTQQLLQLEQEHHDHEEQQEKEPEDEEQSQLLYENIELRKPKTVYENLRGEEMKFITEEQKPNVDRIELDSLDSLPDNMEHEQSSPSKSPTFSVKELANKFESSPVEQLPNFDFSVRGGSMKKPNELSVPKTMPAPVPLKKLNSSAQKITRSLDENAFVREFGGKQLQDLSLSNKLPEVMSEVNSRRKSFDFTRPKTLNPPKRLPGMSITEEICQKRVGEMEAITPTTENRISLIQQNNMPKEQQSSANQFLPPAGRKNVLTGVVLDRERIDKIKEERRQQLTQKYYGDTLKSRSRTELNSEDNFPAAESLRIKSKSRGDMHALQKDIDMNLKQLSRVTGGGSECTLHTGLSQGNGQEHLGQQRVRRISDEKNQNCDTSNGGVSGITSTSLLSVKTTAQKYGSTSKTPANKFERSQPMPRDRLQRNSLAESNAGTNNREKISPQFSIRDVTAMFESRSQNQ.

The tract at residues 94–117 (ASTESSCSPPIQGAVPPPKPSRHM) is disordered. 3 positions are modified to phosphoserine: S166, S168, and S180. In terms of domain architecture, SH3 spans 295–363 (PAVGAAYGVR…PQSCVATIGD (69 aa)). The Rho-GAP domain maps to 424 to 618 (CDLSEHLLNS…YLIRNCHNIF (195 aa)). The tract at residues 746 to 780 (PRSWQKRKPDKTPSWKSIFSRSQRQGNPDPGQKIT) is disordered. Residues 759–771 (SWKSIFSRSQRQG) are compositionally biased toward polar residues. S837 and S840 each carry phosphoserine. A Phosphothreonine modification is found at T843. Residues S851, S861, S872, and S876 each carry the phosphoserine modification. Disordered stretches follow at residues 894–975 (ESES…GHES) and 1013–1106 (ASVE…RVEP). Polar residues predominate over residues 928–939 (FSSQTNSVNPSP). Position 1029 is a phosphoserine (S1029). The span at 1029-1053 (SPISSSNGASVGSSSSSTRYSYPSV) shows a compositional bias: low complexity. Over residues 1058–1069 (KRKEQQDAKERF) the composition is skewed to basic and acidic residues. A compositionally biased stretch (polar residues) spans 1071–1097 (YQGTFTQPGQKQESSAPRPVHSTNNGA). Phosphothreonine is present on residues T1118 and T1121. 4 positions are modified to phosphoserine: S1125, S1216, S1281, and S1284. Residues 1378–1404 (YKAAEMTQQLLQLEQEHHDHEEQQEKE) adopt a coiled-coil conformation. Phosphoserine occurs at positions 1453 and 1456. T1679 carries the post-translational modification Phosphothreonine. 2 disordered regions span residues 1721-1745 (TGGGSECTLHTGLSQGNGQEHLGQQ) and 1779-1829 (TAQK…QFSI). Polar residues predominate over residues 1779–1790 (TAQKYGSTSKTP). Basic and acidic residues predominate over residues 1793–1806 (KFERSQPMPRDRLQ). A compositionally biased stretch (polar residues) spans 1807 to 1818 (RNSLAESNAGTN).

In terms of tissue distribution, ubiquitously expressed.

In terms of biological role, probably functions as a GTPase-activating protein (GAP) for RAC1 and/or CDC42. Required for optic stalk formation. In Drosophila melanogaster (Fruit fly), this protein is GTPase-activating protein CdGAPr (CdGAPr).